The sequence spans 341 residues: MAP3K12-binding inhibitory protein 1 (341 aa).

S91 bears the Phosphoserine mark. Residues K94, K127, K137, K151, and K233 each participate in a glycyl lysine isopeptide (Lys-Gly) (interchain with G-Cter in SUMO2) cross-link. The interval 170-341 (AEINENNVRE…EADSMAAHLP (172 aa)) is interaction with MAP3K12. Residues 269–283 (IYQRIKKLEDKILEL) form a leucine-zipper 1 region. Position 299 is an N6-acetyllysine; alternate (K299). K299 is covalently cross-linked (Glycyl lysine isopeptide (Lys-Gly) (interchain with G-Cter in SUMO2); alternate). Glycyl lysine isopeptide (Lys-Gly) (interchain with G-Cter in SUMO2) cross-links involve residues K302 and K323. Positions 312–327 (LAELDEKISALKRALL) are leucine-zipper 2.

As to quaternary structure, component of the ADA2A-containing complex (ATAC), composed of KAT14, KAT2A, TADA2L, TADA3L, ZZ3, MBIP, WDR5, YEATS2, CCDC101 and DR1. In the complex, it probably interacts directly with KAT2A, KAT14 and WDR5.

Its subcellular location is the nucleus. It is found in the cytoplasm. Functionally, inhibits the MAP3K12 activity to induce the activation of the JNK/SAPK pathway. Component of the ATAC complex, a complex with histone acetyltransferase activity on histones H3 and H4. In Mus musculus (Mouse), this protein is MAP3K12-binding inhibitory protein 1 (Mbip).